We begin with the raw amino-acid sequence, 89 residues long: Cornifin-B (89 aa).

The segment at 1–29 is disordered; sequence MSSQQQKQPCTPPPQLQQQQVKQPCQPPP. Tandem repeats lie at residues 3–14, 18–29, 31–38, 39–46, 47–54, 55–62, 63–70, and 71–78. Residues 3 to 29 form a 2 X 12 AA approximate repeats region; sequence SQQQKQPCTPPPQLQQQQVKQPCQPPP. A 6 X 8 AA approximate tandem repeats region spans residues 31–78; sequence EPCIPKTKEPCHPKVPEPCHPKVPEPCQPKVPEPCHPKVPEPCPSIVT.

The protein belongs to the cornifin (SPRR) family. In terms of processing, the N-terminus is blocked. As to expression, suprabasal layers of squamous-differentiated tissues such as epidermis, esophagus, tongue and trachea.

It localises to the cytoplasm. Its function is as follows. Cross-linked envelope protein of keratinocytes. It is a keratinocyte protein that first appears in the cell cytosol, but ultimately becomes cross-linked to membrane proteins by transglutaminase. All that results in the formation of an insoluble envelope beneath the plasma membrane. Can function as both amine donor and acceptor in transglutaminase-mediated cross-linkage. The sequence is that of Cornifin-B (SPRR1B) from Homo sapiens (Human).